A 106-amino-acid polypeptide reads, in one-letter code: ATPase inhibitor, mitochondrial (106 aa).

The transit peptide at 1-25 directs the protein to the mitochondrion; sequence MAGSALAVRARFGVWGMKVLQTRGF. The interval 26–52 is N-terminal inhibitory region; sequence VSDSSDSMDTGAGSIREAGGAFGKREK. A disordered region spans residues 26–58; it reads VSDSSDSMDTGAGSIREAGGAFGKREKAEEDRY. Ser39 is subject to Phosphoserine. Positions 48-58 are enriched in basic and acidic residues; that stretch reads GKREKAEEDRY. Residues 60–106 adopt a coiled-coil conformation; it reads REKTKEQLAALRKHHEDEIDHHSKEIERLQKQIERHKKKIQQLKNNH. Positions 74 to 106 are antiparallel alpha-helical coiled coil region; that stretch reads HEDEIDHHSKEIERLQKQIERHKKKIQQLKNNH. An N6-succinyllysine modification is found at Lys103.

The protein belongs to the ATPase inhibitor family. In terms of assembly, homodimer; represents the active form and is present at a pH value below 6.5. Homotetramer; represents the inactive form and is present at a pH value above 7.0.

It localises to the mitochondrion. Functionally, endogenous F(1)F(o)-ATPase inhibitor limiting ATP depletion when the mitochondrial membrane potential falls below a threshold and the F(1)F(o)-ATP synthase starts hydrolyzing ATP to pump protons out of the mitochondrial matrix. Required to avoid the consumption of cellular ATP when the F(1)F(o)-ATP synthase enzyme acts as an ATP hydrolase. Indirectly acts as a regulator of heme synthesis in erythroid tissues: regulates heme synthesis by modulating the mitochondrial pH and redox potential, allowing FECH to efficiently catalyze the incorporation of iron into protoporphyrin IX to produce heme. The chain is ATPase inhibitor, mitochondrial from Mus musculus (Mouse).